Consider the following 271-residue polypeptide: Small ribosomal subunit protein uS2 (271 aa).

The segment at 235–271 (FDAKNPLKPQNYNAPNKRPYQDSPRKPSYQNQNQNQI) is disordered. Polar residues predominate over residues 262–271 (SYQNQNQNQI).

Belongs to the universal ribosomal protein uS2 family.

The sequence is that of Small ribosomal subunit protein uS2 from Onion yellows phytoplasma (strain OY-M).